The sequence spans 1298 residues: Ras guanine nucleotide exchange factor Q (1298 aa).

Disordered stretches follow at residues 1 to 26, 46 to 88, 211 to 271, 314 to 384, and 459 to 533; these read MDIN…INNF, NNNI…SIEG, NISN…GPLK, YTPP…QQQQ, and LSNG…STTT. 2 stretches are compositionally biased toward low complexity: residues 211–245 and 315–384; these read NISN…NSNN and TPPS…QQQQ. Residues 352–389 are a coiled coil; sequence SSLNANNNTNNNNQQLQQQQQQQQQQQLQQQQQLTKSY. Over residues 473–482 the composition is skewed to polar residues; it reads LHLSTESTTS. 2 stretches are compositionally biased toward low complexity: residues 483–501 and 508–533; these read NNNN…NNNN and TTNS…STTT. The N-terminal Ras-GEF domain occupies 550–689; sequence DKDEVIAGER…YLKKAINDSG (140 aa). In terms of domain architecture, DEP spans 723–801; it reads MSQSLQLKER…SSSSTTTTTT (79 aa). Disordered stretches follow at residues 781–864 and 884–920; these read SKSG…PNSI and GIAN…SNSF. Low complexity predominate over residues 783–864; the sequence is SGSSFSPSSS…ITSTSLPNSI (82 aa). Positions 964 to 1193 constitute a Ras-GEF domain; it reads HPVEIARQLT…YKASHMIEQP (230 aa). Residues 1214 to 1267 form a disordered region; that stretch reads TTTTTNNLNNNNNNNNPNNNNNNNNNSANNKSSPSPSPSSSPITSSPISSLTIN.

Its function is as follows. Promotes the exchange of Ras-bound GDP by GTP. Seems to play a role in chemotaxis. This Dictyostelium discoideum (Social amoeba) protein is Ras guanine nucleotide exchange factor Q (gefQ).